Reading from the N-terminus, the 408-residue chain is MKTTTYSLLALAAASKLASAHTTVQAVWINGEDQGLGNTDDGYIRSPPSNSPVTDVTSTDMTCNVNGDQAASKTLSVKAGDVVTFEWHHSDRSDSDDIIASSHKGPVQVYMAPTAKGSNGNNWVKIAEDGYHKSSDEWATDILIANKGKHNITVPDVPAGNYLFRPEIIALHEGNREGGAQFYMECVQFKVTSDGSNELPSGVSIPGVYTATDPGILFDIYNSFDSYPIPGPDVWDGSSSGSSSSGSSSAAVSSAAAAATTSAVAATTPATQAAVEVSSSAAAATTEAAAPVVSSAAPVQQATSAVTSQAQAAPTTFATSSKKSSKTACKNKTKSNSQVAAATSSVVAPAATSSVVPVVSASASASAGGVAKQYERCGGINHTGPTTCESGSVCKKWNPYYYQCVASQ.

The first 20 residues, 1–20 (MKTTTYSLLALAAASKLASA), serve as a signal peptide directing secretion. Residues His-21 and His-103 each coordinate Cu(2+). Residues Cys-63 and Cys-186 are joined by a disulfide bond. N-linked (GlcNAc...) asparagine glycosylation occurs at Asn-151. Position 172 (His-172) interacts with O2. Tyr-183 lines the Cu(2+) pocket. Residues Asn-331 and Asn-381 are each glycosylated (N-linked (GlcNAc...) asparagine). The CBM1 domain maps to 369–405 (GVAKQYERCGGINHTGPTTCESGSVCKKWNPYYYQCV).

It belongs to the polysaccharide monooxygenase AA9 family. Requires Cu(2+) as cofactor.

The protein resides in the secreted. It carries out the reaction [(1-&gt;4)-beta-D-glucosyl]n+m + reduced acceptor + O2 = 4-dehydro-beta-D-glucosyl-[(1-&gt;4)-beta-D-glucosyl]n-1 + [(1-&gt;4)-beta-D-glucosyl]m + acceptor + H2O.. Lytic polysaccharide monooxygenase (LPMO) that depolymerizes crystalline and amorphous polysaccharides via the oxidation of scissile alpha- or beta-(1-4)-glycosidic bonds, yielding C4 oxidation products. Catalysis by LPMOs requires the reduction of the active-site copper from Cu(II) to Cu(I) by a reducing agent and H(2)O(2) or O(2) as a cosubstrate. The sequence is that of AA9 family lytic polysaccharide monooxygenase A (eglD) from Aspergillus kawachii (strain NBRC 4308) (White koji mold).